Consider the following 348-residue polypeptide: Dihydroorotase (348 aa).

Zn(2+) contacts are provided by H13 and H15. Substrate-binding positions include H15–R17 and N41. Positions 99, 136, and 174 each coordinate Zn(2+). The residue at position 99 (K99) is an N6-carboxylysine. H136 is a binding site for substrate. L219 is a binding site for substrate. D247 provides a ligand contact to Zn(2+). Residue D247 is part of the active site. Substrate is bound by residues H251 and A263.

Belongs to the metallo-dependent hydrolases superfamily. DHOase family. Class II DHOase subfamily. In terms of assembly, homodimer. Requires Zn(2+) as cofactor.

It catalyses the reaction (S)-dihydroorotate + H2O = N-carbamoyl-L-aspartate + H(+). The protein operates within pyrimidine metabolism; UMP biosynthesis via de novo pathway; (S)-dihydroorotate from bicarbonate: step 3/3. In terms of biological role, catalyzes the reversible cyclization of carbamoyl aspartate to dihydroorotate. This is Dihydroorotase from Rhizobium johnstonii (strain DSM 114642 / LMG 32736 / 3841) (Rhizobium leguminosarum bv. viciae).